The following is a 242-amino-acid chain: Ribonuclease PH (242 aa).

Phosphate contacts are provided by residues R87 and 125–127 (STR).

Belongs to the RNase PH family. Homohexameric ring arranged as a trimer of dimers.

It catalyses the reaction tRNA(n+1) + phosphate = tRNA(n) + a ribonucleoside 5'-diphosphate. In terms of biological role, phosphorolytic 3'-5' exoribonuclease that plays an important role in tRNA 3'-end maturation. Removes nucleotide residues following the 3'-CCA terminus of tRNAs; can also add nucleotides to the ends of RNA molecules by using nucleoside diphosphates as substrates, but this may not be physiologically important. Probably plays a role in initiation of 16S rRNA degradation (leading to ribosome degradation) during starvation. This is Ribonuclease PH from Synechococcus sp. (strain JA-3-3Ab) (Cyanobacteria bacterium Yellowstone A-Prime).